The following is a 410-amino-acid chain: MAKINDHYLKLKAGYLFPEIGRRVREFAAANPSAKVIRLGIGDVTRPLAPAVIKAFHEAVDDLATTENFAGYGPEQGYDWLINAIIEKSYKPLGVDLKTEEMFISDGSKCDCANILDIFALDNVVAIGDPVYPVYNDTNVMIGRTGEADDKGYYKGIVYMPCTEENGFIPSLPTEKVDIIYLCFPNNPTGTVATKAELKKWVDYAIANDAVIFFDAAYEAFITDPAIPHSIYEIEGAKKCAIEFRSFSKTAGFTGVRCGLVVVPEEVMGTTPTGEKYSFNKLWLRRTTTKFNGASYPVQKAAAAVYSDEGWQQNKEIIDYYMENARIIREGLAAAGLTVYGGVNAPYIWLKTPGGMSSWDFFDKLLNECNVVGTPGSGFGPSGEGFFRLSAFGHRENVIEAVERIKKNLK.

Substrate contacts are provided by tyrosine 15 and glycine 42. Pyridoxal 5'-phosphate contacts are provided by residues tyrosine 72, 108 to 109 (SK), tyrosine 132, asparagine 187, tyrosine 218, and 246 to 248 (SFS). 3 residues coordinate substrate: lysine 109, tyrosine 132, and asparagine 187. Lysine 249 is modified (N6-(pyridoxal phosphate)lysine). The pyridoxal 5'-phosphate site is built by arginine 257 and asparagine 292. Asparagine 292 and arginine 388 together coordinate substrate.

Belongs to the class-I pyridoxal-phosphate-dependent aminotransferase family. LL-diaminopimelate aminotransferase subfamily. As to quaternary structure, homodimer. Pyridoxal 5'-phosphate serves as cofactor.

The enzyme catalyses (2S,6S)-2,6-diaminopimelate + 2-oxoglutarate = (S)-2,3,4,5-tetrahydrodipicolinate + L-glutamate + H2O + H(+). The protein operates within amino-acid biosynthesis; L-lysine biosynthesis via DAP pathway; LL-2,6-diaminopimelate from (S)-tetrahydrodipicolinate (aminotransferase route): step 1/1. Functionally, involved in the synthesis of meso-diaminopimelate (m-DAP or DL-DAP), required for both lysine and peptidoglycan biosynthesis. Catalyzes the direct conversion of tetrahydrodipicolinate to LL-diaminopimelate. The sequence is that of LL-diaminopimelate aminotransferase from Geobacter sulfurreducens (strain ATCC 51573 / DSM 12127 / PCA).